Reading from the N-terminus, the 358-residue chain is Tripartite motif-containing protein 54 (358 aa).

An RING-type zinc finger spans residues 26 to 82 (CPICLEMFSKPVVILPCQHNLCRKCANDVFQASNPLWQSRGSTTVSSGGRFRCPSCR). Residues 121-163 (EQHLMCEEHEEEKINIYCLSCEVPTCSLCKVFGAHKDCEVAPL) form a B box-type zinc finger. Zn(2+) contacts are provided by Cys126, His129, Cys149, and His155. Positions 168–211 (KRQKSELSDGIAMLVAGNDRVQAVITQMEEVCQTIEDNSRRQKQ) are mediates microtubule-binding and homooligomerization. The stretch at 194-258 (QMEEVCQTIE…LIRQYGDHLE (65 aa)) forms a coiled coil. Residues 271–329 (MEEPQMALYLQQAKELINKVGAMSKVELAGRPEPGYESMEQFTVSVEHVAEMLRTIDFQ) form the COS domain. Residues 326–358 (IDFQPGASGEEEEVAPDGDEGSAGQEEERPDGP) are disordered. Residues 334-345 (GEEEEVAPDGDE) show a composition bias toward acidic residues.

Homooligomer and heterooligomer. Interacts with TRIM63 and probably with TRIM55. Interacts with tubulin.

Its subcellular location is the cytoplasm. The protein resides in the cytoskeleton. The protein localises to the myofibril. It localises to the sarcomere. It is found in the z line. Its function is as follows. May bind and stabilize microtubules during myotubes formation. This is Tripartite motif-containing protein 54 (TRIM54) from Pongo abelii (Sumatran orangutan).